Reading from the N-terminus, the 501-residue chain is Cytochrome P450 monooxygenase ccsG (501 aa).

The first 28 residues, 1–28 (MMITLFTLAVVSIGFFLWWLLTVQPAVT), serve as a signal peptide directing secretion. N-linked (GlcNAc...) asparagine glycans are attached at residues N115 and N154. C443 is a binding site for heme.

This sequence belongs to the cytochrome P450 family. It depends on heme as a cofactor.

It participates in mycotoxin biosynthesis. In terms of biological role, cytochrome P450 monooxygenase; part of the gene cluster that mediates the biosynthesis of a family of the mycotoxins cytochalasins E and K. The hybrid PKS-NRPS synthetase ccsA and the enoyl reductase ccsC are responsible for fusion of phenylalanine with an octaketide backbone and subsequent release of the stable tetramic acid precursor. The polyketide synthase module (PKS) of the PKS-NRPS ccsA is responsible for the synthesis of the octaketide backbone. The downstream nonribosomal peptide synthetase (NRPS) amidates the carboxyl end of the octaketide with a phenylalanine. A reductase-like domain (R) at the C-terminus catalyzes the reductive release of the polyketide-amino acid intermediate. Because ccsA lacks a designated enoylreductase (ER) domain, the required activity is provided the enoyl reductase ccsC. Upon formation of the 11-membered carbocycle-fused perhydroisoindolone intermediate, a number of oxidative steps are required to afford the final cytochalasin E and K, including two hydroxylations at C17 and C18, one alcohol oxidation at C17, one epoxidation at C6 and C7 and two Baeyer-Villiger oxidations. The oxidative modification at C17, C18 and the C6-C7 epoxidation are likely to be catalyzed by the two cytochrome P450 oxygenases ccsD and ccsG. CcsD may be responsible for the epoxidation of the C6-C7 double bond. CcsG may be responsible for the successive oxidative modifications at C17 and C18. The double Baeyer-Villiger oxidations of ketocytochalasin to precytochalasin and cytochalasin Z(16) are among the final steps leading to cytochalasin E and K and are catalyzed by ccsB. The first oxygen insertion step follows that of the classic BVMO mechanism, generating the ester precytochalasin. Release of precytochalasin into an aqueous environment can generate the shunt product iso-precytochalasin through spontaneous isomerization. Alternatively, precytochalasin can undergo further oxidation by ccsB to yield the in-line carbonate-containing cytochalasin Z(16). Cytochalasin Z(16) is a precursor to cytochalasin E and cytochalasin K, whereas iso-precytochalasin is a precursor to cytochalasin Z(17) and rosellichalasin. The hydrolyase ccsE may catalyze hydrolysis of epoxide bond in cytochalasin E to afford cytochalasin K. The function of ccsF has not been assigned but it may play a role in post-PKS-NRPS biosynthetic step, resistance or transport of cytochalasins and related PKS-NRPS products. The chain is Cytochrome P450 monooxygenase ccsG from Aspergillus clavatus (strain ATCC 1007 / CBS 513.65 / DSM 816 / NCTC 3887 / NRRL 1 / QM 1276 / 107).